A 495-amino-acid polypeptide reads, in one-letter code: Acetyl-coenzyme A carboxylase carboxyl transferase subunit beta, chloroplastic (495 aa).

A disordered region spans residues 188-208 (SRNSSENEGSSRRTRTKGSDL). A CoA carboxyltransferase N-terminal domain is found at 226 to 495 (LWVQCENCYG…PLNQKSSKIK (270 aa)). Zn(2+) contacts are provided by Cys230, Cys233, Cys249, and Cys252. The C4-type zinc finger occupies 230 to 252 (CENCYGLNYKKFFKSKMNICEQC).

Belongs to the AccD/PCCB family. As to quaternary structure, acetyl-CoA carboxylase is a heterohexamer composed of biotin carboxyl carrier protein, biotin carboxylase and 2 subunits each of ACCase subunit alpha and ACCase plastid-coded subunit beta (accD). It depends on Zn(2+) as a cofactor.

The protein localises to the plastid. The protein resides in the chloroplast stroma. The catalysed reaction is N(6)-carboxybiotinyl-L-lysyl-[protein] + acetyl-CoA = N(6)-biotinyl-L-lysyl-[protein] + malonyl-CoA. It functions in the pathway lipid metabolism; malonyl-CoA biosynthesis; malonyl-CoA from acetyl-CoA: step 1/1. Functionally, component of the acetyl coenzyme A carboxylase (ACC) complex. Biotin carboxylase (BC) catalyzes the carboxylation of biotin on its carrier protein (BCCP) and then the CO(2) group is transferred by the transcarboxylase to acetyl-CoA to form malonyl-CoA. The polypeptide is Acetyl-coenzyme A carboxylase carboxyl transferase subunit beta, chloroplastic (Nicotiana tomentosiformis (Tobacco)).